The chain runs to 291 residues: Acetyl-coenzyme A carboxylase carboxyl transferase subunit beta (291 aa).

A CoA carboxyltransferase N-terminal domain is found at valine 23–serine 291.

It belongs to the AccD/PCCB family. In terms of assembly, acetyl-CoA carboxylase is a heterohexamer composed of biotin carboxyl carrier protein (AccB), biotin carboxylase (AccC) and two subunits each of ACCase subunit alpha (AccA) and ACCase subunit beta (AccD).

Its subcellular location is the cytoplasm. The catalysed reaction is N(6)-carboxybiotinyl-L-lysyl-[protein] + acetyl-CoA = N(6)-biotinyl-L-lysyl-[protein] + malonyl-CoA. It functions in the pathway lipid metabolism; malonyl-CoA biosynthesis; malonyl-CoA from acetyl-CoA: step 1/1. Functionally, component of the acetyl coenzyme A carboxylase (ACC) complex. Biotin carboxylase (BC) catalyzes the carboxylation of biotin on its carrier protein (BCCP) and then the CO(2) group is transferred by the transcarboxylase to acetyl-CoA to form malonyl-CoA. The protein is Acetyl-coenzyme A carboxylase carboxyl transferase subunit beta of Opitutus terrae (strain DSM 11246 / JCM 15787 / PB90-1).